A 503-amino-acid polypeptide reads, in one-letter code: Probable cytosol aminopeptidase (503 aa).

Residues Lys270 and Asp275 each coordinate Mn(2+). Lys282 is an active-site residue. Mn(2+)-binding residues include Asp293, Asp352, and Glu354. Residue Arg356 is part of the active site.

This sequence belongs to the peptidase M17 family. Requires Mn(2+) as cofactor.

The protein localises to the cytoplasm. It catalyses the reaction Release of an N-terminal amino acid, Xaa-|-Yaa-, in which Xaa is preferably Leu, but may be other amino acids including Pro although not Arg or Lys, and Yaa may be Pro. Amino acid amides and methyl esters are also readily hydrolyzed, but rates on arylamides are exceedingly low.. The enzyme catalyses Release of an N-terminal amino acid, preferentially leucine, but not glutamic or aspartic acids.. In terms of biological role, presumably involved in the processing and regular turnover of intracellular proteins. Catalyzes the removal of unsubstituted N-terminal amino acids from various peptides. This chain is Probable cytosol aminopeptidase, found in Klebsiella pneumoniae subsp. pneumoniae (strain ATCC 700721 / MGH 78578).